The primary structure comprises 104 residues: Large ribosomal subunit protein uL24 (104 aa).

This sequence belongs to the universal ribosomal protein uL24 family. In terms of assembly, part of the 50S ribosomal subunit.

Functionally, one of two assembly initiator proteins, it binds directly to the 5'-end of the 23S rRNA, where it nucleates assembly of the 50S subunit. In terms of biological role, one of the proteins that surrounds the polypeptide exit tunnel on the outside of the subunit. This is Large ribosomal subunit protein uL24 from Erwinia tasmaniensis (strain DSM 17950 / CFBP 7177 / CIP 109463 / NCPPB 4357 / Et1/99).